Reading from the N-terminus, the 321-residue chain is Nucleotide-binding protein LI0459 (321 aa).

An ATP-binding site is contributed by 41–48; sequence GMSGAGKS.

It belongs to the RapZ-like family.

Functionally, displays ATPase and GTPase activities. This Lawsonia intracellularis (strain PHE/MN1-00) protein is Nucleotide-binding protein LI0459.